A 151-amino-acid chain; its full sequence is MTTLTNPQKAAIRSSWSKFMDNGVSNGQGFYMDLFKAHPETLTPFKSLFGGLTLAQLQDNPKMKAQSLVFCNGMSSFVDHLDDNMLVVLIQKMAKLHNNRGIRASDLRTAYDILIHYMEDHNHMVGGAKDAWEVFVGFICKTLGDYMKELS.

Threonine 2 is modified (N-acetylthreonine). The Globin domain maps to 3–148 (TLTNPQKAAI…ICKTLGDYMK (146 aa)). A heme b-binding site is contributed by histidine 97.

This sequence belongs to the globin family. As to quaternary structure, homotetramer.

The protein resides in the cytoplasm. The protein is Hemoglobin-2 of Phacoides pectinatus (Thick lucine).